Consider the following 298-residue polypeptide: N-acetylmuramic acid 6-phosphate etherase (298 aa).

The SIS domain maps to 54 to 217 (CISAIKNHGR…STVTMIKLGK (164 aa)). E82 acts as the Proton donor in catalysis. The active site involves E113.

Belongs to the GCKR-like family. MurNAc-6-P etherase subfamily. Homodimer.

It catalyses the reaction N-acetyl-D-muramate 6-phosphate + H2O = N-acetyl-D-glucosamine 6-phosphate + (R)-lactate. It participates in amino-sugar metabolism; N-acetylmuramate degradation. In terms of biological role, specifically catalyzes the cleavage of the D-lactyl ether substituent of MurNAc 6-phosphate, producing GlcNAc 6-phosphate and D-lactate. In Petrotoga mobilis (strain DSM 10674 / SJ95), this protein is N-acetylmuramic acid 6-phosphate etherase.